The following is a 485-amino-acid chain: Cysteine--tRNA ligase (485 aa).

Cys29 provides a ligand contact to Zn(2+). A 'HIGH' region motif is present at residues Ala31–His41. A disordered region spans residues Gln174–Leu198. Over residues Ala185–Ala197 the composition is skewed to basic and acidic residues. 3 residues coordinate Zn(2+): Cys227, His252, and Glu256. The 'KMSKS' region signature appears at Lys283–Ser287. Lys286 lines the ATP pocket.

The protein belongs to the class-I aminoacyl-tRNA synthetase family. Monomer. Requires Zn(2+) as cofactor.

It localises to the cytoplasm. The catalysed reaction is tRNA(Cys) + L-cysteine + ATP = L-cysteinyl-tRNA(Cys) + AMP + diphosphate. This Micrococcus luteus (strain ATCC 4698 / DSM 20030 / JCM 1464 / CCM 169 / CCUG 5858 / IAM 1056 / NBRC 3333 / NCIMB 9278 / NCTC 2665 / VKM Ac-2230) (Micrococcus lysodeikticus) protein is Cysteine--tRNA ligase.